The following is a 300-amino-acid chain: 4-diphosphocytidyl-2-C-methyl-D-erythritol kinase (300 aa).

Lys22 is a catalytic residue. 105-115 (PMGGGLGGGSS) serves as a coordination point for ATP. Asp147 is an active-site residue.

The protein belongs to the GHMP kinase family. IspE subfamily.

It carries out the reaction 4-CDP-2-C-methyl-D-erythritol + ATP = 4-CDP-2-C-methyl-D-erythritol 2-phosphate + ADP + H(+). The protein operates within isoprenoid biosynthesis; isopentenyl diphosphate biosynthesis via DXP pathway; isopentenyl diphosphate from 1-deoxy-D-xylulose 5-phosphate: step 3/6. Functionally, catalyzes the phosphorylation of the position 2 hydroxy group of 4-diphosphocytidyl-2C-methyl-D-erythritol. This chain is 4-diphosphocytidyl-2-C-methyl-D-erythritol kinase, found in Colwellia psychrerythraea (strain 34H / ATCC BAA-681) (Vibrio psychroerythus).